Here is a 150-residue protein sequence, read N- to C-terminus: Large ribosomal subunit protein bL9 (150 aa).

Belongs to the bacterial ribosomal protein bL9 family.

Its function is as follows. Binds to the 23S rRNA. This chain is Large ribosomal subunit protein bL9, found in Streptococcus pyogenes serotype M3 (strain SSI-1).